A 606-amino-acid chain; its full sequence is Elongation factor 4 (606 aa).

In terms of domain architecture, tr-type G spans 10 to 192 (KNIRNFSIIA…ALVARVPPPQ (183 aa)). Residues 22 to 27 (DHGKST) and 139 to 142 (NKID) each bind GTP.

This sequence belongs to the TRAFAC class translation factor GTPase superfamily. Classic translation factor GTPase family. LepA subfamily.

It localises to the cell inner membrane. The enzyme catalyses GTP + H2O = GDP + phosphate + H(+). Required for accurate and efficient protein synthesis under certain stress conditions. May act as a fidelity factor of the translation reaction, by catalyzing a one-codon backward translocation of tRNAs on improperly translocated ribosomes. Back-translocation proceeds from a post-translocation (POST) complex to a pre-translocation (PRE) complex, thus giving elongation factor G a second chance to translocate the tRNAs correctly. Binds to ribosomes in a GTP-dependent manner. This chain is Elongation factor 4, found in Nitrosococcus oceani (strain ATCC 19707 / BCRC 17464 / JCM 30415 / NCIMB 11848 / C-107).